The sequence spans 318 residues: Myoblast determination protein 1 (318 aa).

Met1 participates in a covalent cross-link: Peptide (Met-Gly) (interchain with G-Cter in ubiquitin). Lys104 carries the N6-methyllysine; by EHMT2 modification. The bHLH domain occupies Asp109 to Leu160. Disordered stretches follow at residues Ala174 to Asn224 and Ala266 to Leu318. The segment covering Ser197 to Ser207 has biased composition (polar residues). A compositionally biased stretch (low complexity) spans Ala266–Pro276.

In terms of assembly, efficient DNA binding requires dimerization with another bHLH protein. Seems to form active heterodimers with ITF-2. Interacts with SUV39H1. Interacts with DDX5. Interacts with CHD2. Interacts with TSC22D3. Interacts with SETD3. Interacts with P-TEFB complex; promotes the transcriptional activity of MYOD1 through its CDK9-mediated phosphorylation. Interacts with CSRP3. Interacts with NUPR1. In terms of processing, phosphorylated by CDK9. This phosphorylation promotes its function in muscle differentiation. Post-translationally, acetylated by a complex containing EP300 and PCAF. The acetylation is essential to activate target genes. Conversely, its deacetylation by SIRT1 inhibits its function. Ubiquitinated on the N-terminus; which is required for proteasomal degradation. In terms of processing, methylation at Lys-104 by EHMT2/G9a inhibits myogenic activity.

The protein resides in the nucleus. Its function is as follows. Acts as a transcriptional activator that promotes transcription of muscle-specific target genes and plays a role in muscle differentiation. Together with MYF5 and MYOG, co-occupies muscle-specific gene promoter core region during myogenesis. Induces fibroblasts to differentiate into myoblasts. Interacts with and is inhibited by the twist protein. This interaction probably involves the basic domains of both proteins. The polypeptide is Myoblast determination protein 1 (MYOD1) (Bos taurus (Bovine)).